Here is a 195-residue protein sequence, read N- to C-terminus: Cytochrome c oxidase assembly protein CtaG (195 aa).

Residues 1–9 (MALNGPQKT) lie on the Cytoplasmic side of the membrane. A helical; Signal-anchor for type II membrane protein transmembrane segment spans residues 10–30 (VVQLVGVVVLMGGLAWASVPF). The Periplasmic segment spans residues 31–195 (YDWFCRVTGF…DTSGAETELN (165 aa)).

The protein belongs to the COX11/CtaG family.

It is found in the cell inner membrane. Exerts its effect at some terminal stage of cytochrome c oxidase synthesis, probably by being involved in the insertion of the copper B into subunit I. The chain is Cytochrome c oxidase assembly protein CtaG from Ruegeria sp. (strain TM1040) (Silicibacter sp.).